Reading from the N-terminus, the 513-residue chain is Maturase K (513 aa).

The protein belongs to the intron maturase 2 family. MatK subfamily.

It localises to the plastid. The protein resides in the chloroplast. In terms of biological role, usually encoded in the trnK tRNA gene intron. Probably assists in splicing its own and other chloroplast group II introns. This Danthonia spicata (Poverty oatgrass) protein is Maturase K.